Reading from the N-terminus, the 387-residue chain is tRNA pseudouridine synthase B (387 aa).

Asp43 functions as the Nucleophile in the catalytic mechanism.

The protein belongs to the pseudouridine synthase TruB family. Type 1 subfamily.

The enzyme catalyses uridine(55) in tRNA = pseudouridine(55) in tRNA. In terms of biological role, responsible for synthesis of pseudouridine from uracil-55 in the psi GC loop of transfer RNAs. The polypeptide is tRNA pseudouridine synthase B (Bifidobacterium longum (strain DJO10A)).